The sequence spans 362 residues: Putative lipoprotein YdaJ (362 aa).

Positions 1 to 20 (MRHVLIAVILFFLSIGLSAG) are cleaved as a signal peptide. Cys21 carries the N-palmitoyl cysteine lipid modification. The S-diacylglycerol cysteine moiety is linked to residue Cys21.

Its subcellular location is the cell membrane. This Bacillus subtilis (strain 168) protein is Putative lipoprotein YdaJ (ydaJ).